The following is a 328-amino-acid chain: Serine/threonine protein kinase RdoA (328 aa).

D201 functions as the Proton acceptor in the catalytic mechanism. Residues N206 and D217 each coordinate Mg(2+). D217 is an active-site residue.

Belongs to the SrkA/RdoA protein kinase family. Monomer. Requires Mg(2+) as cofactor.

The protein localises to the cytoplasm. It carries out the reaction L-seryl-[protein] + ATP = O-phospho-L-seryl-[protein] + ADP + H(+). It catalyses the reaction L-threonyl-[protein] + ATP = O-phospho-L-threonyl-[protein] + ADP + H(+). Its function is as follows. A protein kinase that (auto)phosphorylates on Ser and Thr residues, probably involved in the extracytoplasmic stress response. Probably acts to suppress the effects of stress linked to accumulation of reactive oxygen species. The protein is Serine/threonine protein kinase RdoA of Salmonella typhimurium (strain LT2 / SGSC1412 / ATCC 700720).